Reading from the N-terminus, the 383-residue chain is Erythronate-4-phosphate dehydrogenase (383 aa).

Residues serine 45 and threonine 66 each coordinate substrate. Residues aspartate 146, threonine 174, 205–207 (ASR), and aspartate 231 contribute to the NAD(+) site. Arginine 207 is an active-site residue. Glutamate 236 is a catalytic residue. Histidine 253 functions as the Proton donor in the catalytic mechanism. Glycine 256 serves as a coordination point for NAD(+). Residue tyrosine 257 coordinates substrate.

It belongs to the D-isomer specific 2-hydroxyacid dehydrogenase family. PdxB subfamily. Homodimer.

The protein resides in the cytoplasm. The enzyme catalyses 4-phospho-D-erythronate + NAD(+) = (R)-3-hydroxy-2-oxo-4-phosphooxybutanoate + NADH + H(+). It functions in the pathway cofactor biosynthesis; pyridoxine 5'-phosphate biosynthesis; pyridoxine 5'-phosphate from D-erythrose 4-phosphate: step 2/5. Its function is as follows. Catalyzes the oxidation of erythronate-4-phosphate to 3-hydroxy-2-oxo-4-phosphonooxybutanoate. The polypeptide is Erythronate-4-phosphate dehydrogenase (Pseudomonas entomophila (strain L48)).